Here is a 298-residue protein sequence, read N- to C-terminus: tRNA-cytidine(32) 2-sulfurtransferase (298 aa).

Positions 1–26 (MTAVISLPDPPQRASRGPRVAGPGQD) are disordered. Residues 57–62 (SGGKDS) carry the PP-loop motif motif. [4Fe-4S] cluster-binding residues include C132, C135, and C223.

Belongs to the TtcA family. As to quaternary structure, homodimer. Requires Mg(2+) as cofactor. The cofactor is [4Fe-4S] cluster.

It is found in the cytoplasm. It catalyses the reaction cytidine(32) in tRNA + S-sulfanyl-L-cysteinyl-[cysteine desulfurase] + AH2 + ATP = 2-thiocytidine(32) in tRNA + L-cysteinyl-[cysteine desulfurase] + A + AMP + diphosphate + H(+). The protein operates within tRNA modification. Catalyzes the ATP-dependent 2-thiolation of cytidine in position 32 of tRNA, to form 2-thiocytidine (s(2)C32). The sulfur atoms are provided by the cysteine/cysteine desulfurase (IscS) system. The chain is tRNA-cytidine(32) 2-sulfurtransferase from Stenotrophomonas maltophilia (strain R551-3).